The sequence spans 347 residues: 4-hydroxy-2-oxovalerate aldolase (347 aa).

The 252-residue stretch at 11 to 262 (PVVVDTTLRD…NPGLDVFKLL (252 aa)) folds into the Pyruvate carboxyltransferase domain. 19–20 (RD) contacts substrate. Asp-20 lines the Mn(2+) pocket. The active-site Proton acceptor is His-23. Substrate is bound by residues Ser-173 and His-201. Mn(2+) contacts are provided by His-201 and His-203. Residue Tyr-292 participates in substrate binding.

This sequence belongs to the 4-hydroxy-2-oxovalerate aldolase family. Homodimer. Can also form a heterotetramer composed of two aldolase (TTHB246) and two dehydrogenase (TTHB247) subunits. Upon complex formation, the aldolase shows a 5-fold increase in substrate affinity, while the dehydrogenase shows a 3-fold decrease; the kcat values of each enzyme are reduced by 2-fold when they are in a complex. Requires Co(2+) as cofactor. The cofactor is Ni(2+). It depends on Mn(2+) as a cofactor.

It catalyses the reaction (S)-4-hydroxy-2-oxopentanoate = acetaldehyde + pyruvate. The enzyme catalyses (S)-4-hydroxy-2-oxohexanoate = propanal + pyruvate. With respect to regulation, appears to be allosterically activated by NADH. Its function is as follows. Catalyzes the retro-aldol cleavage of both 4-hydroxy-2-oxopentanoate (HOPA) and 4-hydroxy-2-oxohexanoate (HOHA) to pyruvate and acetaldehyde or propanaldehyde, respectively. The aldehydes produced by this reaction are directly channeled to the dehydrogenase TTHB247, ensuring that these toxic aldehydes are sequestered from cellular components. Is involved in the meta-cleavage pathway for the degradation of aromatic compounds. Appears to be stereospecific since it can cleave (4S)-4-hydroxy-2-oxopentanoate but not the (4R) isomer. Is not able to catalyze the aldol addition of 2-oxobutyrate with acetaldehyde; this indicates that the enzyme is specific for pyruvate as the carbonyl donor. This is 4-hydroxy-2-oxovalerate aldolase from Thermus thermophilus (strain ATCC 27634 / DSM 579 / HB8).